Consider the following 521-residue polypeptide: Glucose-6-phosphate isomerase (521 aa).

E327 serves as the catalytic Proton donor. Catalysis depends on residues H358 and K486.

The protein belongs to the GPI family.

The protein resides in the cytoplasm. The enzyme catalyses alpha-D-glucose 6-phosphate = beta-D-fructose 6-phosphate. The protein operates within carbohydrate biosynthesis; gluconeogenesis. It functions in the pathway carbohydrate degradation; glycolysis; D-glyceraldehyde 3-phosphate and glycerone phosphate from D-glucose: step 2/4. Its function is as follows. Catalyzes the reversible isomerization of glucose-6-phosphate to fructose-6-phosphate. The sequence is that of Glucose-6-phosphate isomerase from Bordetella bronchiseptica (strain ATCC BAA-588 / NCTC 13252 / RB50) (Alcaligenes bronchisepticus).